We begin with the raw amino-acid sequence, 179 residues long: Large ribosomal subunit protein uL6 (179 aa).

This sequence belongs to the universal ribosomal protein uL6 family. Part of the 50S ribosomal subunit.

In terms of biological role, this protein binds to the 23S rRNA, and is important in its secondary structure. It is located near the subunit interface in the base of the L7/L12 stalk, and near the tRNA binding site of the peptidyltransferase center. In Koribacter versatilis (strain Ellin345), this protein is Large ribosomal subunit protein uL6.